The sequence spans 114 residues: Large ribosomal subunit protein bL19 (114 aa).

The protein belongs to the bacterial ribosomal protein bL19 family.

This protein is located at the 30S-50S ribosomal subunit interface and may play a role in the structure and function of the aminoacyl-tRNA binding site. The polypeptide is Large ribosomal subunit protein bL19 (Clavibacter michiganensis subsp. michiganensis (strain NCPPB 382)).